Consider the following 247-residue polypeptide: Uridylate kinase (247 aa).

An ATP-binding site is contributed by 18-21 (KLSG). A UMP-binding site is contributed by glycine 60. ATP-binding residues include glycine 61 and arginine 65. UMP is bound by residues aspartate 80 and 141-148 (TGNPFFTT). 3 residues coordinate ATP: threonine 168, tyrosine 174, and aspartate 177.

This sequence belongs to the UMP kinase family. As to quaternary structure, homohexamer.

It localises to the cytoplasm. The enzyme catalyses UMP + ATP = UDP + ADP. It participates in pyrimidine metabolism; CTP biosynthesis via de novo pathway; UDP from UMP (UMPK route): step 1/1. With respect to regulation, inhibited by UTP. In terms of biological role, catalyzes the reversible phosphorylation of UMP to UDP. The protein is Uridylate kinase of Pseudomonas fluorescens (strain ATCC BAA-477 / NRRL B-23932 / Pf-5).